The sequence spans 957 residues: SH3 domain-binding protein 4-A (957 aa).

Positions 54-113 (ENVKEVVAIKDYCPNNFTTLKFSKGEHLYVLDASGGDWWYAHNSTEMGYIPSSYVQPLNY) constitute an SH3 1 domain. The ZU5 domain maps to 312 to 449 (TSIVCRLDSS…LEPVMYVVMV (138 aa)). One can recognise an SH3 2 domain in the interval 649–719 (TSLKYGKLLK…HAKNVLVVGK (71 aa)).

In terms of assembly, homodimer or homooligomer.

Its subcellular location is the membrane. The protein localises to the clathrin-coated pit. The protein resides in the cytoplasmic vesicle. It localises to the clathrin-coated vesicle. It is found in the nucleus. Functionally, possible role in regulating endocytosis of the transferrin receptor at the plasma membrane. Alternatively, may function as a negative regulator of the amino acid-induced TOR signaling by inhibiting the formation of active Rag GTPase complexes. Preferentially binds inactive Rag GTPase complexes and prevents their interaction with the mTORC1 complex inhibiting its relocalization to lysosomes and its activation. Thereby, may indirectly regulate cell growth, proliferation and autophagy. The chain is SH3 domain-binding protein 4-A (sh3bp4-a) from Xenopus laevis (African clawed frog).